The following is a 163-amino-acid chain: MPTDDPSDRPSGLLDQLSRLIETLAELDDDNGEQHGHSTIDRGRTRIDYDYAVSIGLGSDARSPSTPAGNADDAGDAETAHIETRASDDSDDLVVVADLPGVTDETAVDAAVEDTGALTISVGDDVVERLTLDDPGMTITSLTVTNQILELRVTPSEPSATDT.

The interval 57–92 (LGSDARSPSTPAGNADDAGDAETAHIETRASDDSDD) is disordered. Residues 78–88 (ETAHIETRASD) show a composition bias toward basic and acidic residues.

This sequence belongs to the gas vesicle GvpH family. As to quaternary structure, gvpF to GvpM interact with each other in vitro, and may form multi-subunit complex(es). Interacts with GvpC. Might interact with GvpA.

It is found in the gas vesicle. The protein localises to the cytoplasm. Its function is as follows. A minor component of the gas vesicle, also found in soluble extracts. Proteins GvpF to GvpM might be involved in nucleating gas vesicle formation. Gas vesicles are hollow, gas filled proteinaceous nanostructures found in several microbial planktonic microorganisms. They allow positioning of halobacteria at the optimal depth for growth in the poorly aerated, shallow brine pools of their habitat. Expression of 2 c-vac DNA fragments containing 2 divergently transcribed regions (gvpE-gvpF-gvpG-gvpH-gvpI-gvpJ-gvpK-gvpL-gvpM and gvpA-gvpC-gvpN-gvpO) allows H.volcanii to produce gas vesicles. The protein is Gas vesicle protein H2 of Halobacterium salinarum (strain ATCC 700922 / JCM 11081 / NRC-1) (Halobacterium halobium).